The following is a 214-amino-acid chain: Large ribosomal subunit protein bL25 (214 aa).

Residues 187-214 (AEVAPSIEETVEPEVIKKGKKAEEEEEK) are disordered. Positions 200–214 (EVIKKGKKAEEEEEK) are enriched in basic and acidic residues.

The protein belongs to the bacterial ribosomal protein bL25 family. CTC subfamily. In terms of assembly, part of the 50S ribosomal subunit; part of the 5S rRNA/L5/L18/L25 subcomplex. Contacts the 5S rRNA. Binds to the 5S rRNA independently of L5 and L18.

Functionally, this is one of the proteins that binds to the 5S RNA in the ribosome where it forms part of the central protuberance. The protein is Large ribosomal subunit protein bL25 of Thermodesulfovibrio yellowstonii (strain ATCC 51303 / DSM 11347 / YP87).